Reading from the N-terminus, the 267-residue chain is MTPNIHTVILDIEGTTTPISFVHDVLFPYIRDNLVRHINQKWGSEELKQDIKELYKLYLEDNKASELVVNNQFNTPEILNPDDESTDKEKLIESVIRNVIYQMDNDRKSTPLKQLQGHMWLEGYENELVKGVVFPEVPKAFENWNLNHIDIYIYSSGSIAAQKLLFNYSNFGSLLPYIKGHFDTTIGGKLHPSSYEKILSTINNGSPNSYLFVTDSILEAKAARESGLNVCLSIRDGNPPIVDRELLNTFDQVSSFDQLFNKFNFKN.

Mg(2+)-binding residues include aspartate 11 and glutamate 13. Substrate-binding positions include 155-156 (SS) and lysine 189. Aspartate 215 is a binding site for Mg(2+).

The protein belongs to the HAD-like hydrolase superfamily. MasA/MtnC family. As to quaternary structure, monomer. Requires Mg(2+) as cofactor.

It is found in the cytoplasm. The protein localises to the nucleus. It catalyses the reaction 5-methylsulfanyl-2,3-dioxopentyl phosphate + H2O = 1,2-dihydroxy-5-(methylsulfanyl)pent-1-en-3-one + phosphate. The protein operates within amino-acid biosynthesis; L-methionine biosynthesis via salvage pathway; L-methionine from S-methyl-5-thio-alpha-D-ribose 1-phosphate: step 3/6. Its pathway is amino-acid biosynthesis; L-methionine biosynthesis via salvage pathway; L-methionine from S-methyl-5-thio-alpha-D-ribose 1-phosphate: step 4/6. Functionally, bifunctional enzyme that catalyzes the enolization of 2,3-diketo-5-methylthiopentyl-1-phosphate (DK-MTP-1-P) into the intermediate 2-hydroxy-3-keto-5-methylthiopentenyl-1-phosphate (HK-MTPenyl-1-P), which is then dephosphorylated to form the acireductone 1,2-dihydroxy-3-keto-5-methylthiopentene (DHK-MTPene). The sequence is that of Enolase-phosphatase E1 (enoph1) from Dictyostelium discoideum (Social amoeba).